Reading from the N-terminus, the 688-residue chain is Transcription factor GTE9 (688 aa).

The disordered stretch occupies residues 1–36; it reads MTERNGGFPGDYCFEAPGGDYDEGSDSPRVSEGSNC. In terms of domain architecture, Bromo spans 132–238; the sequence is TAVMLLMKQC…KFFEVRWKTL (107 aa). The NET domain maps to 280 to 361; it reads ENVVDPAKRV…EHLREIQNKK (82 aa). The segment at 423 to 505 is disordered; it reads GNSLGSVSGD…AQNEKQLPPE (83 aa). Ser-478 is modified (phosphoserine). A compositionally biased stretch (polar residues) spans 491–500; that stretch reads QDGNSAQNEK. Positions 505–688 are transcription activation domain; the sequence is EKSYRAAILK…EIDIEEGEID (184 aa). Positions 534-613 form a coiled coil; sequence TRDPEKLQRE…QSVELNENAK (80 aa). The segment at 660–688 is disordered; the sequence is FMKQDEDEEEADPLTSPAPEIDIEEGEID.

Interacts with BT1.

It localises to the nucleus. The sequence is that of Transcription factor GTE9 (GTE9) from Arabidopsis thaliana (Mouse-ear cress).